Reading from the N-terminus, the 146-residue chain is MVIYYGKKNCTLLLLLFILCNIYSGSNILLISCSFFFLVSGTSIQLNIINANRQAANMYPSLKSILDTIIGVKSDIKKLNIQLINVQIAIDMALVLRGNNSDTSTNVTGPNVIANQKIKQQVTIIKTIFEKSVSLPNVPTVAYVII.

The first 24 residues, 1–24, serve as a signal peptide directing secretion; sequence MVIYYGKKNCTLLLLLFILCNIYS. N-linked (GlcNAc...) asparagine glycans are attached at residues Asn-99 and Asn-106.

This is an uncharacterized protein from Saccharomyces cerevisiae (strain ATCC 204508 / S288c) (Baker's yeast).